A 532-amino-acid chain; its full sequence is 2,3-bisphosphoglycerate-independent phosphoglycerate mutase (532 aa).

Mn(2+)-binding residues include Asp-15 and Ser-65. Ser-65 acts as the Phosphoserine intermediate in catalysis. Substrate is bound by residues His-126, 156–157 (RD), Arg-188, Arg-194, 258–261 (RPDR), and Lys-331. Asp-398, His-402, Asp-439, His-440, and His-457 together coordinate Mn(2+).

Belongs to the BPG-independent phosphoglycerate mutase family. Monomer. Mn(2+) is required as a cofactor.

The catalysed reaction is (2R)-2-phosphoglycerate = (2R)-3-phosphoglycerate. The protein operates within carbohydrate degradation; glycolysis; pyruvate from D-glyceraldehyde 3-phosphate: step 3/5. Functionally, catalyzes the interconversion of 2-phosphoglycerate and 3-phosphoglycerate. This Microcystis aeruginosa (strain NIES-843 / IAM M-2473) protein is 2,3-bisphosphoglycerate-independent phosphoglycerate mutase.